We begin with the raw amino-acid sequence, 264 residues long: S-adenosylmethionine decarboxylase proenzyme (264 aa).

Ser113 serves as the catalytic Schiff-base intermediate with substrate; via pyruvic acid. Pyruvic acid (Ser); by autocatalysis is present on Ser113. His118 serves as the catalytic Proton acceptor; for processing activity. The active-site Proton donor; for catalytic activity is the Cys141.

It belongs to the prokaryotic AdoMetDC family. Type 2 subfamily. As to quaternary structure, heterooctamer of four alpha and four beta chains arranged as a tetramer of alpha/beta heterodimers. Requires pyruvate as cofactor. Post-translationally, is synthesized initially as an inactive proenzyme. Formation of the active enzyme involves a self-maturation process in which the active site pyruvoyl group is generated from an internal serine residue via an autocatalytic post-translational modification. Two non-identical subunits are generated from the proenzyme in this reaction, and the pyruvate is formed at the N-terminus of the alpha chain, which is derived from the carboxyl end of the proenzyme. The post-translation cleavage follows an unusual pathway, termed non-hydrolytic serinolysis, in which the side chain hydroxyl group of the serine supplies its oxygen atom to form the C-terminus of the beta chain, while the remainder of the serine residue undergoes an oxidative deamination to produce ammonia and the pyruvoyl group blocking the N-terminus of the alpha chain.

It catalyses the reaction S-adenosyl-L-methionine + H(+) = S-adenosyl 3-(methylsulfanyl)propylamine + CO2. It functions in the pathway amine and polyamine biosynthesis; S-adenosylmethioninamine biosynthesis; S-adenosylmethioninamine from S-adenosyl-L-methionine: step 1/1. Its function is as follows. Catalyzes the decarboxylation of S-adenosylmethionine to S-adenosylmethioninamine (dcAdoMet), the propylamine donor required for the synthesis of the polyamines spermine and spermidine from the diamine putrescine. This is S-adenosylmethionine decarboxylase proenzyme from Pseudomonas syringae pv. tomato (strain ATCC BAA-871 / DC3000).